The chain runs to 386 residues: O-methyltransferase 10 (386 aa).

S-adenosyl-L-homocysteine contacts are provided by Ser207, Gly231, Asp254, Asp274, and Lys288. Residue Asp254 participates in S-adenosyl-L-methionine binding. His292 acts as the Proton acceptor in catalysis.

Belongs to the class I-like SAM-binding methyltransferase superfamily. Cation-independent O-methyltransferase family. As to quaternary structure, homodimer.

It catalyses the reaction dopamine + S-adenosyl-L-methionine = 4-methoxytyramine + S-adenosyl-L-homocysteine + H(+). The enzyme catalyses 3,4-dihydroxy-5-methoxyphenethylamine + S-adenosyl-L-methionine = 3-hydroxy-4,5-dimethoxyphenethylamine + S-adenosyl-L-homocysteine + H(+). The catalysed reaction is 3-hydroxy-4,5-dimethoxyphenethylamine + S-adenosyl-L-methionine = mescaline + S-adenosyl-L-homocysteine + H(+). It carries out the reaction 4-hydroxy-3,5-dimethoxyphenethylamine + S-adenosyl-L-methionine = mescaline + S-adenosyl-L-homocysteine + H(+). Its pathway is aromatic compound metabolism. The protein operates within alkaloid biosynthesis. Its function is as follows. O-methyltransferase participating in the biosynthesis of natural products derived from phenylethylamine, including mescaline, a natural hallucinogen potentially used in psychotherapeutic treatments. Catalyzes the O-methylation of mescaline para hydroxyl groups, using dopamine, 3,4-dihydroxy-5-methoxyphenethylamine, 3-hydroxy-4,5-dimethoxyphenethylamine and 4-hydroxy-3,5-dimethoxyphenethylamine as substrates. The polypeptide is O-methyltransferase 10 (Lophophora williamsii (Peyote)).